Reading from the N-terminus, the 137-residue chain is Transcription antitermination protein NusB (137 aa).

It belongs to the NusB family.

Its function is as follows. Involved in transcription antitermination. Required for transcription of ribosomal RNA (rRNA) genes. Binds specifically to the boxA antiterminator sequence of the ribosomal RNA (rrn) operons. The protein is Transcription antitermination protein NusB of Haemophilus ducreyi (strain 35000HP / ATCC 700724).